A 617-amino-acid chain; its full sequence is Phenylalanine--tRNA ligase beta subunit (617 aa).

The B5 domain occupies 306-383; that stretch reads IQEKQINAQV…IGYGYDNLKK (78 aa). 4 residues coordinate Mg(2+): D361, D367, E370, and D371.

Belongs to the phenylalanyl-tRNA synthetase beta subunit family. Type 2 subfamily. Tetramer of two alpha and two beta subunits. It depends on Mg(2+) as a cofactor.

The protein localises to the cytoplasm. It catalyses the reaction tRNA(Phe) + L-phenylalanine + ATP = L-phenylalanyl-tRNA(Phe) + AMP + diphosphate + H(+). The protein is Phenylalanine--tRNA ligase beta subunit (phesB) of Dictyostelium discoideum (Social amoeba).